Reading from the N-terminus, the 366-residue chain is Holliday junction branch migration complex subunit RuvB (366 aa).

The tract at residues 3–183 is large ATPase domain (RuvB-L); sequence ADGLVSAAAS…FGFTAHLDFY (181 aa). ATP-binding positions include L22, R23, G64, K67, T68, S69, 130–132, R173, Y183, and R220; that span reads EDF. T68 contributes to the Mg(2+) binding site. Residues 184-254 are small ATPAse domain (RuvB-S); sequence APDELARVLT…VARAALRIYD (71 aa). Residues 257–366 are head domain (RuvB-H); sequence GLGLDRLDRA…PEDGLHPGGG (110 aa). Residues R312 and R317 each contribute to the DNA site.

The protein belongs to the RuvB family. Homohexamer. Forms an RuvA(8)-RuvB(12)-Holliday junction (HJ) complex. HJ DNA is sandwiched between 2 RuvA tetramers; dsDNA enters through RuvA and exits via RuvB. An RuvB hexamer assembles on each DNA strand where it exits the tetramer. Each RuvB hexamer is contacted by two RuvA subunits (via domain III) on 2 adjacent RuvB subunits; this complex drives branch migration. In the full resolvosome a probable DNA-RuvA(4)-RuvB(12)-RuvC(2) complex forms which resolves the HJ.

The protein resides in the cytoplasm. The enzyme catalyses ATP + H2O = ADP + phosphate + H(+). In terms of biological role, the RuvA-RuvB-RuvC complex processes Holliday junction (HJ) DNA during genetic recombination and DNA repair, while the RuvA-RuvB complex plays an important role in the rescue of blocked DNA replication forks via replication fork reversal (RFR). RuvA specifically binds to HJ cruciform DNA, conferring on it an open structure. The RuvB hexamer acts as an ATP-dependent pump, pulling dsDNA into and through the RuvAB complex. RuvB forms 2 homohexamers on either side of HJ DNA bound by 1 or 2 RuvA tetramers; 4 subunits per hexamer contact DNA at a time. Coordinated motions by a converter formed by DNA-disengaged RuvB subunits stimulates ATP hydrolysis and nucleotide exchange. Immobilization of the converter enables RuvB to convert the ATP-contained energy into a lever motion, pulling 2 nucleotides of DNA out of the RuvA tetramer per ATP hydrolyzed, thus driving DNA branch migration. The RuvB motors rotate together with the DNA substrate, which together with the progressing nucleotide cycle form the mechanistic basis for DNA recombination by continuous HJ branch migration. Branch migration allows RuvC to scan DNA until it finds its consensus sequence, where it cleaves and resolves cruciform DNA. This chain is Holliday junction branch migration complex subunit RuvB, found in Frankia alni (strain DSM 45986 / CECT 9034 / ACN14a).